We begin with the raw amino-acid sequence, 242 residues long: Biosynthetic peptidoglycan transglycosylase (242 aa).

A helical membrane pass occupies residues 19–39; that stretch reads LMVVLAIFWGGGIALFSVAPV.

Belongs to the glycosyltransferase 51 family.

It is found in the cell inner membrane. The catalysed reaction is [GlcNAc-(1-&gt;4)-Mur2Ac(oyl-L-Ala-gamma-D-Glu-L-Lys-D-Ala-D-Ala)](n)-di-trans,octa-cis-undecaprenyl diphosphate + beta-D-GlcNAc-(1-&gt;4)-Mur2Ac(oyl-L-Ala-gamma-D-Glu-L-Lys-D-Ala-D-Ala)-di-trans,octa-cis-undecaprenyl diphosphate = [GlcNAc-(1-&gt;4)-Mur2Ac(oyl-L-Ala-gamma-D-Glu-L-Lys-D-Ala-D-Ala)](n+1)-di-trans,octa-cis-undecaprenyl diphosphate + di-trans,octa-cis-undecaprenyl diphosphate + H(+). The protein operates within cell wall biogenesis; peptidoglycan biosynthesis. Peptidoglycan polymerase that catalyzes glycan chain elongation from lipid-linked precursors. This is Biosynthetic peptidoglycan transglycosylase from Escherichia coli O127:H6 (strain E2348/69 / EPEC).